A 188-amino-acid chain; its full sequence is Cytochrome b561 homolog 2 (188 aa).

Over 1–15 (MSFTNTPERYGVISA) the chain is Cytoplasmic. Residues 16-36 (AFHWLSAIIVYGMFALGLWMV) form a helical membrane-spanning segment. Heme b is bound by residues His18 and His52. Over 37–54 (TLSYYDGWYHKAPELHKS) the chain is Periplasmic. A helical membrane pass occupies residues 55-75 (IGILLMMGLVIRVLWRVISPP). Over 76-91 (PGPLPSYSPMTRLAAR) the chain is Cytoplasmic. Residues 92–112 (AGHLALYLLLFAIGISGYLIS) form a helical membrane-spanning segment. Over 113 to 143 (TADGKPISVFGWFDVPATLADAGAQADFAGA) the chain is Periplasmic. A helical membrane pass occupies residues 144-164 (LHFWLAWSVVVLSVMHGFMAL). His145 and His159 together coordinate heme b. Residues 165 to 188 (KHHFIDKDDTLKRMLGKSSSDYGV) are Cytoplasmic-facing.

Belongs to the cytochrome b561 family. Requires heme b as cofactor.

Its subcellular location is the cell inner membrane. In Escherichia coli (strain K12), this protein is Cytochrome b561 homolog 2 (yceJ).